A 34-amino-acid chain; its full sequence is MSDIN-like toxin proprotein 3 (34 aa).

Positions Met1–Pro10 are excised as a propeptide. Residues Leu11–Pro18 constitute a cross-link (cyclopeptide (Leu-Pro)). A propeptide spanning residues Cys19–Ser34 is cleaved from the precursor.

Belongs to the MSDIN fungal toxin family. In terms of processing, processed by the macrocyclase-peptidase enzyme POPB to yield a toxic cyclic octapeptide. POPB first removes 10 residues from the N-terminus. Conformational trapping of the remaining peptide forces the enzyme to release this intermediate rather than proceed to macrocyclization. The enzyme rebinds the remaining peptide in a different conformation and catalyzes macrocyclization of the N-terminal 8 residues. Expressed in basidiocarps.

Functionally, probable toxin that belongs to the MSDIN-like toxin family responsible for a large number of food poisoning cases and deaths. The chain is MSDIN-like toxin proprotein 3 from Amanita exitialis (Guangzhou destroying angel).